Reading from the N-terminus, the 710-residue chain is Interferon-induced GTP-binding protein Mx2 (710 aa).

A disordered region spans residues 1-87; that stretch reads MSLSFRPLKY…RSKGPENNLY (87 aa). Composition is skewed to polar residues over residues 39-50 and 58-79; these read QTMSPPQWQVEE and NNFS…QQRS. In terms of domain architecture, Dynamin-type G spans 112-383; it reads DLALPAIAVI…LIWHINKSLP (272 aa). The segment at 122 to 129 is G1 motif; it reads GDQSSGKS. 122-129 lines the GTP pocket; the sequence is GDQSSGKS. The G2 motif stretch occupies residues 147–149; it reads ITR. The tract at residues 221–224 is G3 motif; sequence DLPG. GTP-binding positions include 221–225 and 290–293; these read DLPGI and TKPD. Residues 290–293 form a G4 motif region; that stretch reads TKPD. Residues 322–325 are G5 motif; it reads KCRG. In terms of domain architecture, GED spans 619 to 710; the sequence is IVEIGVHLNA…ALYEFPHFKG (92 aa).

It belongs to the TRAFAC class dynamin-like GTPase superfamily. Dynamin/Fzo/YdjA family.

The protein localises to the cytoplasm. It localises to the nucleus. Its function is as follows. Interferon-induced dynamin-like GTPase with antiviral activity against vesicular stomatitis virus (VSV). The protein is Interferon-induced GTP-binding protein Mx2 (MX2) of Bubalus bubalis (Domestic water buffalo).